Reading from the N-terminus, the 400-residue chain is MAIKLEVKNLYKIFGEHPQRAFKYIEKGLSKEQILEKTGLSLGVKDASLAIEEGEIFVIMGLSGSGKSTMVRLLNRLIEPTRGQVLIDGVDIAKISDAELREVRRKKIAMVFQSFALMPHMTVLDNTAFGMELAGIAAQERREKALDALRQVGLENYAHAYPDELSGGMRQRVGLARALAINPDILLMDEAFSALDPLIRTEMQDELVKLQAKHQRTIVFISHDLDEAMRIGDRIAIMQNGEVVQVGTPDEILNNPANDYVRTFFRGVDISQVFSAKDIARRSPVGLIRKTPGFGPRSALKLLQDEDREYGYVIERGNKFVGVVSIDSLKAALSQAQGIEAALIDDPLVVDAQTPLSELLSHVGQAPCAVPVVDEEHQYVGIISKRMLLQALDREGGNNG.

The ABC transporter domain maps to 29 to 265 (LSKEQILEKT…PANDYVRTFF (237 aa)). 61-68 (GLSGSGKS) serves as a coordination point for ATP. CBS domains lie at 280-341 (ARRS…GIEA) and 343-400 (LIDD…GNNG).

This sequence belongs to the ABC transporter superfamily. In terms of assembly, the complex is composed of two ATP-binding proteins (ProV), two transmembrane proteins (ProW) and a solute-binding protein (ProX).

The protein resides in the cell inner membrane. In terms of biological role, part of the ProU ABC transporter complex involved in glycine betaine and proline betaine uptake. Probably responsible for energy coupling to the transport system. This Salmonella typhimurium (strain LT2 / SGSC1412 / ATCC 700720) protein is Glycine betaine/proline betaine transport system ATP-binding protein ProV.